The sequence spans 277 residues: Putative protease slr0021 (277 aa).

The Nucleophile role is filled by Ser85. The active-site Proton donor/acceptor is the Lys137.

The protein belongs to the peptidase S49 family.

This Synechocystis sp. (strain ATCC 27184 / PCC 6803 / Kazusa) protein is Putative protease slr0021.